Consider the following 746-residue polypeptide: Stromal interaction molecule 2 (746 aa).

A signal peptide spans 1-14; that stretch reads MLLFGLLVAGVADG. Residues 15–218 are Extracellular-facing; sequence CDLVPRHLRG…RPPHNWMKDF (204 aa). A Phosphoserine modification is found at serine 28. The region spanning 67 to 102 is the EF-hand domain; the sequence is FSLEALQTIHKQMDDDKDGGIEVDESDEFIREDMKY. Ca(2+) contacts are provided by aspartate 80, aspartate 82, aspartate 84, and glutamate 91. An N-linked (GlcNAc...) asparagine glycan is attached at asparagine 135. An SAM domain is found at 136 to 204; the sequence is WTLEDTLQWL…QLKALDVVLF (69 aa). A helical transmembrane segment spans residues 219-235; it reads ILTISIVIGVGGCWFAY. The Cytoplasmic segment spans residues 236–746; it reads TQNKTSKEHV…IKSLFKKKSK (511 aa). Positions 247–394 form a coiled coil; it reads KMMKDLESLQ…EKIKKKRSTV (148 aa). 2 disordered regions span residues 490 to 562 and 592 to 651; these read PIVP…PDIL and DTAS…RGSP. Position 523 is a phosphoserine (serine 523). The span at 527-539 shows a compositional bias: low complexity; sequence QRAQLPAHAPLAA. Residues 540-549 are compositionally biased toward basic residues; it reads HPRHPHHPQH. Phosphoserine is present on residues serine 609 and serine 621. Residues 625–637 are compositionally biased toward basic and acidic residues; it reads ISRDELSLEDSSR. Phosphoserine occurs at positions 640, 650, 661, 665, 680, and 697. Residues 684–746 are disordered; the sequence is LSSGIPVPHP…IKSLFKKKSK (63 aa). A compositionally biased stretch (basic and acidic residues) spans 723–732; sequence DLCHNGEKSK. A compositionally biased stretch (basic residues) spans 733–746; it reads KPSKIKSLFKKKSK.

As to quaternary structure, oligomer with STIM1. Interacts with ORAI1. In terms of processing, glycosylated. Phosphorylated predominantly on Ser residues.

Its subcellular location is the endoplasmic reticulum membrane. In terms of biological role, plays a role in mediating store-operated Ca(2+) entry (SOCE), a Ca(2+) influx following depletion of intracellular Ca(2+) stores. Functions as a highly sensitive Ca(2+) sensor in the endoplasmic reticulum which activates both store-operated and store-independent Ca(2+)-influx. Regulates basal cytosolic and endoplasmic reticulum Ca(2+) concentrations. Upon mild variations of the endoplasmic reticulum Ca(2+) concentration, translocates from the endoplasmic reticulum to the plasma membrane where it probably activates the Ca(2+) release-activated Ca(2+) (CRAC) channels ORAI1, ORAI2 and ORAI3. May inhibit STIM1-mediated Ca(2+) influx. This Mus musculus (Mouse) protein is Stromal interaction molecule 2 (Stim2).